The primary structure comprises 751 residues: Photosystem I P700 chlorophyll a apoprotein A1 (751 aa).

Transmembrane regions (helical) follow at residues 73-96, 159-182, 198-222, 294-312, 349-372, 388-414, 436-458, and 533-551; these read VFSAHFGQLGVIFIWLSGMYFHGA, LYTTAIGGLVMAAAMFFAGWFHYH, LNHHLAGLLGLGSLSWAGHQIHVSL, TAHHHLAIAVLFLVAGHMY, WHAQLAINLALFGSLSIIVAHHMY, LSLFTHHNWIGGFCIVGAGAHAAIFMV, AIISHLNWVCIFLGFHSFGLYIH, and FLVHHIHAFTIHVTVLILL. Residues Cys-575 and Cys-584 each coordinate [4Fe-4S] cluster. A run of 2 helical transmembrane segments spans residues 591-612 and 665-687; these read HVFLGLFWMYNSLSIAIFHFSW and LSAYGLMFLGAHFVWAFSLMFLF. Residue His-676 coordinates chlorophyll a'. Positions 684 and 692 each coordinate chlorophyll a. Trp-693 contacts phylloquinone. A helical membrane pass occupies residues 725–745; sequence AVGVAHYLLGGIATTWSFFLA.

The protein belongs to the PsaA/PsaB family. In terms of assembly, the PsaA/B heterodimer binds the P700 chlorophyll special pair and subsequent electron acceptors. PSI consists of a core antenna complex that captures photons, and an electron transfer chain that converts photonic excitation into a charge separation. The eukaryotic PSI reaction center is composed of at least 11 subunits. P700 is a chlorophyll a/chlorophyll a' dimer, A0 is one or more chlorophyll a, A1 is one or both phylloquinones and FX is a shared 4Fe-4S iron-sulfur center. is required as a cofactor.

The protein resides in the plastid. It is found in the chloroplast thylakoid membrane. The catalysed reaction is reduced [plastocyanin] + hnu + oxidized [2Fe-2S]-[ferredoxin] = oxidized [plastocyanin] + reduced [2Fe-2S]-[ferredoxin]. PsaA and PsaB bind P700, the primary electron donor of photosystem I (PSI), as well as the electron acceptors A0, A1 and FX. PSI is a plastocyanin/cytochrome c6-ferredoxin oxidoreductase, converting photonic excitation into a charge separation, which transfers an electron from the donor P700 chlorophyll pair to the spectroscopically characterized acceptors A0, A1, FX, FA and FB in turn. Oxidized P700 is reduced on the lumenal side of the thylakoid membrane by plastocyanin or cytochrome c6. The polypeptide is Photosystem I P700 chlorophyll a apoprotein A1 (Tetradesmus obliquus (Green alga)).